Here is a 540-residue protein sequence, read N- to C-terminus: Phosphoenolpyruvate carboxykinase (ATP) (540 aa).

Arginine 65 provides a ligand contact to substrate. N6-acetyllysine is present on lysine 87. Substrate contacts are provided by tyrosine 207 and lysine 213. Residues lysine 213, histidine 232, and 248–256 contribute to the ATP site; that span reads GLSGTGKTT. Mn(2+) contacts are provided by lysine 213 and histidine 232. A Mn(2+)-binding site is contributed by aspartate 269. ATP-binding positions include glutamate 297, arginine 333, 449-450, and threonine 455; that span reads RI. Arginine 333 contributes to the substrate binding site. Lysine 523 carries the N6-acetyllysine modification.

Belongs to the phosphoenolpyruvate carboxykinase (ATP) family. Monomer. Mn(2+) serves as cofactor.

It localises to the cytoplasm. The catalysed reaction is oxaloacetate + ATP = phosphoenolpyruvate + ADP + CO2. Its pathway is carbohydrate biosynthesis; gluconeogenesis. In terms of biological role, involved in the gluconeogenesis. Catalyzes the conversion of oxaloacetate (OAA) to phosphoenolpyruvate (PEP) through direct phosphoryl transfer between the nucleoside triphosphate and OAA. In Escherichia coli O127:H6 (strain E2348/69 / EPEC), this protein is Phosphoenolpyruvate carboxykinase (ATP).